A 299-amino-acid chain; its full sequence is Probable plastid-lipid-associated protein 13, chloroplastic (299 aa).

Residues 1-48 constitute a chloroplast transit peptide; the sequence is MALIHGSVPGTSAVRLVFSTSASPSRFCLNVPVVKQGWKNSCRRRVLR. Alanine 2 carries the post-translational modification N-acetylvaline.

This sequence belongs to the PAP/fibrillin family.

The protein localises to the plastid. Its subcellular location is the chloroplast. The protein resides in the plastoglobule. The chain is Probable plastid-lipid-associated protein 13, chloroplastic (PAP13) from Arabidopsis thaliana (Mouse-ear cress).